The primary structure comprises 79 residues: MGSLSIWHWLIVLLIVALVFGTKKLRNIGGDLGGAVKGFKEGMKEADAPAAEAQQRELPRNGAVDVEAKEKTPRSGDYR.

A helical transmembrane segment spans residues 1–21 (MGSLSIWHWLIVLLIVALVFG). The disordered stretch occupies residues 46–79 (ADAPAAEAQQRELPRNGAVDVEAKEKTPRSGDYR). A compositionally biased stretch (basic and acidic residues) spans 66–79 (VEAKEKTPRSGDYR).

The protein belongs to the TatA/E family. In terms of assembly, the Tat system comprises two distinct complexes: a TatABC complex, containing multiple copies of TatA, TatB and TatC subunits, and a separate TatA complex, containing only TatA subunits. Substrates initially bind to the TatABC complex, which probably triggers association of the separate TatA complex to form the active translocon.

It is found in the cell inner membrane. In terms of biological role, part of the twin-arginine translocation (Tat) system that transports large folded proteins containing a characteristic twin-arginine motif in their signal peptide across membranes. TatA could form the protein-conducting channel of the Tat system. The polypeptide is Sec-independent protein translocase protein TatA (Paraburkholderia phytofirmans (strain DSM 17436 / LMG 22146 / PsJN) (Burkholderia phytofirmans)).